A 200-amino-acid polypeptide reads, in one-letter code: MIAQIRPALVMIVLFTILTGLIYPLAMTGVAKALFPAAAEGSLITRNGQVVGSALIGQNFTSDRYFHGRPSATTTADPNDASKTIPAPYNAANSAGSNLGPTNSALIDRVKTDAEALKAENPSQPVPIDLVTTSGSGLDPHLSPEAALFQVPRVAKARGLSEDALRRLVSEHVEGRLLGVLGEPRVNVLALNLALDESGK.

A helical membrane pass occupies residues 7–27 (PALVMIVLFTILTGLIYPLAM).

This sequence belongs to the KdpC family. The system is composed of three essential subunits: KdpA, KdpB and KdpC.

It is found in the cell inner membrane. Part of the high-affinity ATP-driven potassium transport (or Kdp) system, which catalyzes the hydrolysis of ATP coupled with the electrogenic transport of potassium into the cytoplasm. This subunit acts as a catalytic chaperone that increases the ATP-binding affinity of the ATP-hydrolyzing subunit KdpB by the formation of a transient KdpB/KdpC/ATP ternary complex. The protein is Potassium-transporting ATPase KdpC subunit of Methylocella silvestris (strain DSM 15510 / CIP 108128 / LMG 27833 / NCIMB 13906 / BL2).